A 506-amino-acid chain; its full sequence is ATP synthase subunit alpha, mitochondrial (506 aa).

171–178 contributes to the ATP binding site; that stretch reads GDRQTGKT.

This sequence belongs to the ATPase alpha/beta chains family. As to quaternary structure, F-type ATPases have 2 components, CF(1) - the catalytic core - and CF(0) - the membrane proton channel. CF(1) has five subunits: alpha(3), beta(3), gamma(1), delta(1), epsilon(1). CF(0) has three main subunits: a, b and c.

The protein localises to the mitochondrion. It localises to the mitochondrion inner membrane. In terms of biological role, mitochondrial membrane ATP synthase (F(1)F(0) ATP synthase or Complex V) produces ATP from ADP in the presence of a proton gradient across the membrane which is generated by electron transport complexes of the respiratory chain. F-type ATPases consist of two structural domains, F(1) - containing the extramembraneous catalytic core, and F(0) - containing the membrane proton channel, linked together by a central stalk and a peripheral stalk. During catalysis, ATP synthesis in the catalytic domain of F(1) is coupled via a rotary mechanism of the central stalk subunits to proton translocation. Subunits alpha and beta form the catalytic core in F(1). Rotation of the central stalk against the surrounding alpha(3)beta(3) subunits leads to hydrolysis of ATP in three separate catalytic sites on the beta subunits. Subunit alpha does not bear the catalytic high-affinity ATP-binding sites. The protein is ATP synthase subunit alpha, mitochondrial (ATPA) of Beta vulgaris (Sugar beet).